A 201-amino-acid polypeptide reads, in one-letter code: Large ribosomal subunit protein bL25 (201 aa).

Belongs to the bacterial ribosomal protein bL25 family. CTC subfamily. In terms of assembly, part of the 50S ribosomal subunit; part of the 5S rRNA/L5/L18/L25 subcomplex. Contacts the 5S rRNA. Binds to the 5S rRNA independently of L5 and L18.

Functionally, this is one of the proteins that binds to the 5S RNA in the ribosome where it forms part of the central protuberance. The polypeptide is Large ribosomal subunit protein bL25 (Thiobacillus denitrificans (strain ATCC 25259 / T1)).